The sequence spans 116 residues: Peptidyl-tRNA hydrolase (116 aa).

It belongs to the PTH2 family.

Its subcellular location is the cytoplasm. It carries out the reaction an N-acyl-L-alpha-aminoacyl-tRNA + H2O = an N-acyl-L-amino acid + a tRNA + H(+). Its function is as follows. The natural substrate for this enzyme may be peptidyl-tRNAs which drop off the ribosome during protein synthesis. In Methanococcus maripaludis (strain C7 / ATCC BAA-1331), this protein is Peptidyl-tRNA hydrolase.